The primary structure comprises 33 residues: Zinc metalloproteinase-disintegrin-like moojenin (33 aa).

In terms of domain architecture, Disintegrin spans 8–33 (PPVCGNELLEVGEECDCGTPENCQNE). Val-10, Asn-13, Leu-15, Glu-17, Glu-20, and Asp-23 together coordinate Ca(2+). Disulfide bonds link Cys-11/Cys-30 and Cys-24/Cys-30.

This sequence belongs to the venom metalloproteinase (M12B) family. P-III subfamily. P-IIIb sub-subfamily. Monomer. The cofactor is Zn(2+). Post-translationally, the N-terminus (from the N-terminal region of the metalloproteinase domain) is blocked. In terms of tissue distribution, expressed by the venom gland.

Its subcellular location is the secreted. With respect to regulation, the fibrinogenolytic and coagulant activities of the moojenin were abolished by preincubation with EDTA, 1,10-phenanthroline and beta-mercaptoethanol. Metalloproteinase moojenin: snake venom metalloproteinase that cleaves both alpha- and beta-chains of fibrinogen, but not the gamma-chain. Shows a coagulant activity on bovine plasma about 3.1 fold lower than crude venom. Renders the blood incoagulable when intraperitoneally administered into mice. Induces necrosis in liver and muscle, but does not cause histological alterations in mouse lungs, kidney or heart. The chain is Zinc metalloproteinase-disintegrin-like moojenin from Bothrops moojeni (Lance-headed viper).